The primary structure comprises 91 residues: CRISPR-associated endoribonuclease Cas2 (91 aa).

Residue aspartate 14 coordinates Mg(2+).

This sequence belongs to the CRISPR-associated endoribonuclease Cas2 protein family. As to quaternary structure, homodimer, forms a heterotetramer with a Cas1 homodimer. Mg(2+) serves as cofactor.

CRISPR (clustered regularly interspaced short palindromic repeat), is an adaptive immune system that provides protection against mobile genetic elements (viruses, transposable elements and conjugative plasmids). CRISPR clusters contain sequences complementary to antecedent mobile elements and target invading nucleic acids. CRISPR clusters are transcribed and processed into CRISPR RNA (crRNA). Functions as a ssRNA-specific endoribonuclease. Involved in the integration of spacer DNA into the CRISPR cassette. In Nanoarchaeum equitans (strain Kin4-M), this protein is CRISPR-associated endoribonuclease Cas2.